A 593-amino-acid chain; its full sequence is Metal-response element-binding transcription factor 2 (593 aa).

The interval 1-24 (MRDSTGAGNSLVHKRSPLRRNQKT) is disordered. Over residues 12–22 (VHKRSPLRRNQ) the composition is skewed to basic residues. Threonine 24 is modified (phosphothreonine). The region spanning 44 to 101 (CKFEEGQDVLARWSDGLFYLGTIKKINILKQSCFIIFEDSSKSWVLWKDIQTGATGSG) is the Tudor domain. PHD-type zinc fingers lie at residues 102 to 157 (EMVC…CVFA) and 201 to 255 (QCYC…CSSG). Disordered stretches follow at residues 357 to 410 (VAFK…GPYT) and 444 to 486 (GIAH…TRTG). A Glycyl lysine isopeptide (Lys-Gly) (interchain with G-Cter in SUMO2) cross-link involves residue lysine 360. Over residues 360–374 (KAEKEPEGTSHEFKI) the composition is skewed to basic and acidic residues. Polar residues predominate over residues 447 to 470 (HSSNTSDVDLTGASSANETTSASI). Phosphoserine is present on serine 452. Residue lysine 522 forms a Glycyl lysine isopeptide (Lys-Gly) (interchain with G-Cter in SUMO2) linkage.

The protein belongs to the Polycomblike family. As to quaternary structure, associates with the PRC2 complex, which consists of the core components EED, EZH1 or EZH2, SUZ12, and RBBP4, and various combinations of accessory subunits including AEBP2, JARID2, PHF19, MTF2 and EPOP. Forms a dimeric PRC2.1 (class 1, PRC-PCL) complex consisting of at least SUZ12, RBBP4, and PHF19 or MTF2; PHF19 and MTF2 stabilize the dimeric structure which enhances PRC2 interaction with chromatin.

It localises to the nucleus. Polycomb group (PcG) protein that specifically binds histone H3 trimethylated at 'Lys-36' (H3K36me3) and recruits the PRC2 complex, thus enhancing PRC2 H3K27me3 methylation activity. Regulates the transcriptional networks during embryonic stem cell self-renewal and differentiation. Promotes recruitment of the PRC2 complex to the inactive X chromosome in differentiating XX ES cells and PRC2 recruitment to target genes in undifferentiated ES cells. Required to repress Hox genes by enhancing H3K27me3 methylation of the PRC2 complex. In some conditions may act as an inhibitor of PRC2 activity: able to activate the CDKN2A gene and promote cellular senescence by suppressing the catalytic activity of the PRC2 complex locally. Binds to the metal-regulating-element (MRE) of MT1A gene promoter. This Mus musculus (Mouse) protein is Metal-response element-binding transcription factor 2 (Mtf2).